Reading from the N-terminus, the 306-residue chain is Aspartate carbamoyltransferase catalytic subunit (306 aa).

Residues Arg-55 and Thr-56 each contribute to the carbamoyl phosphate site. Residue Lys-84 participates in L-aspartate binding. Carbamoyl phosphate contacts are provided by Arg-105, His-133, and Gln-136. L-aspartate is bound by residues Arg-166 and Arg-227. The carbamoyl phosphate site is built by Leu-265 and Pro-266.

It belongs to the aspartate/ornithine carbamoyltransferase superfamily. ATCase family. Heterododecamer (2C3:3R2) of six catalytic PyrB chains organized as two trimers (C3), and six regulatory PyrI chains organized as three dimers (R2).

The catalysed reaction is carbamoyl phosphate + L-aspartate = N-carbamoyl-L-aspartate + phosphate + H(+). It functions in the pathway pyrimidine metabolism; UMP biosynthesis via de novo pathway; (S)-dihydroorotate from bicarbonate: step 2/3. Its function is as follows. Catalyzes the condensation of carbamoyl phosphate and aspartate to form carbamoyl aspartate and inorganic phosphate, the committed step in the de novo pyrimidine nucleotide biosynthesis pathway. The polypeptide is Aspartate carbamoyltransferase catalytic subunit (Neisseria gonorrhoeae (strain ATCC 700825 / FA 1090)).